The chain runs to 324 residues: Glutathione synthetase (324 aa).

One can recognise an ATP-grasp domain in the interval 124–309 (KLAIAQFREF…VAGMFIDALE (186 aa)). Residue 150-206 (HAEQGDVIFKPLDGMGGAGIFRVGADGMNLGSVIETLTHNGTRTVMAQQYIPAIRDG) participates in ATP binding. Mg(2+)-binding residues include E280 and N282.

The protein belongs to the prokaryotic GSH synthase family. The cofactor is Mg(2+). It depends on Mn(2+) as a cofactor.

It carries out the reaction gamma-L-glutamyl-L-cysteine + glycine + ATP = glutathione + ADP + phosphate + H(+). Its pathway is sulfur metabolism; glutathione biosynthesis; glutathione from L-cysteine and L-glutamate: step 2/2. The chain is Glutathione synthetase from Ralstonia nicotianae (strain ATCC BAA-1114 / GMI1000) (Ralstonia solanacearum).